The primary structure comprises 275 residues: Penicillin-insensitive murein endopeptidase (275 aa).

Positions 1 to 19 (MKNWIVGMVALVTMVPVMA) are cleaved as a signal peptide. 3 cysteine pairs are disulfide-bonded: Cys-44–Cys-264, Cys-187–Cys-235, and Cys-216–Cys-223. Zn(2+)-binding residues include His-110, His-113, Asp-120, Asp-147, and His-211. The interval 227 to 262 (DTPPPGDGCGAELESWFQPPPPSAKPGKTLPPPLPP) is disordered. Pro residues predominate over residues 244-262 (QPPPPSAKPGKTLPPPLPP).

Belongs to the peptidase M74 family. As to quaternary structure, dimer. Zn(2+) serves as cofactor.

Its subcellular location is the periplasm. In terms of biological role, murein endopeptidase that cleaves the D-alanyl-meso-2,6-diamino-pimelyl amide bond that connects peptidoglycan strands. Likely plays a role in the removal of murein from the sacculus. This Yersinia pestis bv. Antiqua (strain Antiqua) protein is Penicillin-insensitive murein endopeptidase.